A 127-amino-acid chain; its full sequence is MSSTPNPKAFPLADAALTQQILDVVQQASNMRQLKKGANEATKTLNRGISEFIIMAADCEPIEILLHLPLLCEDKNVPYVFVPSRVALGRACGVSRPVIAASITTNDASAIKSQIYAVKDKIETLLI.

It belongs to the eukaryotic ribosomal protein eL8 family. Component of the U3 snoRNP particle. Binds to the C'/D and B/C motifs in U3 snoRNA. Component of the 25S U4/U6.U5 tri-snRNP particle, a subcomplex of the spliceosome. Binds to the 5' stem-loop of U4 snRNA.

It localises to the nucleus. Its subcellular location is the nucleolus. Functionally, common component of the spliceosome and rRNA processing machinery. In association with the spliceosomal U4/U6.U5 tri-snRNP particle, required for splicing of pre-mRNA. In association with box C/D snoRNPs, required for processing of pre-ribosomal RNA (rRNA) and site-specific 2'-O-methylation of substrate RNAs. Essential for the accumulation and stability of U4 snRNA, U6 snRNA, and box C/D snoRNAs. This chain is 13 kDa ribonucleoprotein-associated protein (SNU13), found in Eremothecium gossypii (strain ATCC 10895 / CBS 109.51 / FGSC 9923 / NRRL Y-1056) (Yeast).